The sequence spans 1107 residues: Voltage-gated delayed rectifier potassium channel KCNH8 (1107 aa).

At 1 to 225 the chain is on the cytoplasmic side; sequence MPVMKGLLAP…HFSTFKAGWD (225 aa). One can recognise a PAS domain in the interval 18–90; that stretch reads IATRFDGTHS…LQIEKSLEEK (73 aa). The 53-residue stretch at 93-145 folds into the PAC domain; that stretch reads FKGEIMFYKKNGSPFWCLLDIVPIKNEKGDVVLFLASFKDITDTKVKITPEDK. The helical transmembrane segment at 226-246 threads the bilayer; it reads WLILLATFYVAVTVPYNVCFI. Over 247–255 the chain is Extracellular; the sequence is GNDDLSTTR. Residues 256-276 traverse the membrane as a helical segment; that stretch reads STTVSDIAVEILFIIDIILNF. At 277-298 the chain is on the cytoplasmic side; that stretch reads RTTYVSKSGQVIFEARSICIHY. The chain crosses the membrane as a helical span at residues 299 to 319; sequence VTTWFIIDLIAALPFDLLYAF. Asn-320 is a glycosylation site (N-linked (GlcNAc...) asparagine). Residues 320–327 lie on the Extracellular side of the membrane; it reads NVTVVSLV. The helical; Voltage-sensor transmembrane segment at 328–348 threads the bilayer; sequence HLLKTVRLLRLLRLLQKLDRY. The Cytoplasmic portion of the chain corresponds to 349–357; the sequence is SQHSTIVLT. Residues 358-378 form a helical membrane-spanning segment; it reads LLMSMFALLAHWMACIWYVIG. Over 379–419 the chain is Extracellular; that stretch reads KMEREDNSLLKWEVGWLHELGKRLESPYYGNNTLGGPSIRS. N-linked (GlcNAc...) asparagine glycosylation is present at Asn-409. The segment at residues 420 to 440 is an intramembrane region (pore-forming); it reads AYIAALYFTLSSLTSVGFGNV. The short motif at 434 to 439 is the Selectivity filter element; the sequence is SVGFGN. Residues 441 to 448 lie on the Extracellular side of the membrane; that stretch reads SANTDAEK. The chain crosses the membrane as a helical span at residues 449–469; sequence IFSICTMLIGALMHALVFGNV. Topologically, residues 470 to 1107 are cytoplasmic; it reads TAIIQRMYSR…EVKDNKAINV (638 aa). The interval 551–668 is cNMP-binding domain; that stretch reads LFECASRGCL…HKFVEDIQHD (118 aa). Residues 686-702 are compositionally biased toward polar residues; the sequence is SNKSMVSQSEPKGNGNI. 4 disordered regions span residues 686 to 742, 764 to 791, 818 to 847, and 961 to 989; these read SNKS…NKKV, HSPI…KRKE, EDGN…PPLG, and VDPS…YHSP. The segment covering 710–724 has biased composition (acidic residues); the sequence is VEDEEEEEEGEEEEA. Polar residues predominate over residues 961-972; that stretch reads VDPSSVGSSPQR.

The protein belongs to the potassium channel family. H (Eag) (TC 1.A.1.20) subfamily. Kv12.1/KCNH8 sub-subfamily. As to quaternary structure, the potassium channel is probably composed of a homo- or heterotetrameric complex of pore-forming alpha subunits that can associate with modulating beta subunits. In terms of tissue distribution, primarily expressed in the nervous system.

Its subcellular location is the membrane. The enzyme catalyses K(+)(in) = K(+)(out). Functionally, pore-forming (alpha) subunit of a voltage-gated delayed rectifier potassium channel that mediates outward-rectifying potassium currents. Elicits a slowly activating, non-inactivating and slowly deactivation outwards potassium current at depolarizating voltages from -30 mV to +50mV. Shows no obvious change in the activation rate from different holding potentials. Activation is strongly dependent on the pH of the external solution. In Homo sapiens (Human), this protein is Voltage-gated delayed rectifier potassium channel KCNH8.